The sequence spans 555 residues: Probable portal protein (555 aa).

It belongs to the podoviridae head-to-tail connector protein family. Homododecamer.

It is found in the virion. In terms of biological role, forms the portal vertex of the capsid. This portal plays critical roles in head assembly, genome packaging, neck/tail attachment, and genome ejection. The portal protein multimerizes as a single ring-shaped homododecamer arranged around a central channel. This Bordetella bronchiseptica (Alcaligenes bronchisepticus) protein is Probable portal protein.